A 189-amino-acid polypeptide reads, in one-letter code: MGIAFFGGSFDPIHIGHILVARDVCELCDVDKIYFMPAFISPFKPKPIASPKQRFEMLKLALEDEPWAFIEDIELKKEEISYTYKSALILKEKYQQPPTFIIGYDAYLTLDKWYRYEDLVKIANFIVVKRGKEDIFINNDIDAIFCNTRTIDISSTEIRERIKHGKSVKYMIPDKVLEFILKEGIYAKS.

Belongs to the NadD family.

The catalysed reaction is nicotinate beta-D-ribonucleotide + ATP + H(+) = deamido-NAD(+) + diphosphate. It functions in the pathway cofactor biosynthesis; NAD(+) biosynthesis; deamido-NAD(+) from nicotinate D-ribonucleotide: step 1/1. Functionally, catalyzes the reversible adenylation of nicotinate mononucleotide (NaMN) to nicotinic acid adenine dinucleotide (NaAD). In Hydrogenobaculum sp. (strain Y04AAS1), this protein is Probable nicotinate-nucleotide adenylyltransferase.